A 138-amino-acid polypeptide reads, in one-letter code: Nucleoside diphosphate kinase (138 aa).

Positions 10, 58, 86, 92, 103, and 113 each coordinate ATP. Catalysis depends on H116, which acts as the Pros-phosphohistidine intermediate.

It belongs to the NDK family. Homotetramer. It depends on Mg(2+) as a cofactor.

It localises to the cytoplasm. It carries out the reaction a 2'-deoxyribonucleoside 5'-diphosphate + ATP = a 2'-deoxyribonucleoside 5'-triphosphate + ADP. The catalysed reaction is a ribonucleoside 5'-diphosphate + ATP = a ribonucleoside 5'-triphosphate + ADP. Major role in the synthesis of nucleoside triphosphates other than ATP. The ATP gamma phosphate is transferred to the NDP beta phosphate via a ping-pong mechanism, using a phosphorylated active-site intermediate. The protein is Nucleoside diphosphate kinase of Actinobacillus pleuropneumoniae serotype 5b (strain L20).